The chain runs to 816 residues: S-layer protein (816 aa).

The N-terminal stretch at 1-29 (MAKTNSYKKVIAGTMTAAMVAGVVSPVAA) is a signal peptide. SLH domains are found at residues 30-93 (AGKS…DAKP), 94-150 (SFAD…KVNG), and 152-215 (PATK…VAKV). The BIG2 domain maps to 403–480 (FTSKDFKQND…TVKDSKGKEL (78 aa)).

The protein resides in the secreted. It is found in the cell wall. Its subcellular location is the S-layer. Functionally, the S-layer is a paracrystalline mono-layered assembly of proteins which coat the surface of bacteria. This is S-layer protein from Bacillus thuringiensis subsp. finitimus.